A 209-amino-acid polypeptide reads, in one-letter code: Guanylate kinase (209 aa).

The Guanylate kinase-like domain maps to 5–184 (GLLIVFSGPS…AAERVKRVIE (180 aa)). 12-19 (GPSGVGKG) contributes to the ATP binding site.

This sequence belongs to the guanylate kinase family.

Its subcellular location is the cytoplasm. It carries out the reaction GMP + ATP = GDP + ADP. Essential for recycling GMP and indirectly, cGMP. This chain is Guanylate kinase, found in Streptococcus thermophilus (strain CNRZ 1066).